The chain runs to 325 residues: Acetyl-coenzyme A carboxylase carboxyl transferase subunit alpha (325 aa).

A CoA carboxyltransferase C-terminal domain is found at 35–292 (EIEKLEARLA…DKVLKRSLKQ (258 aa)).

The protein belongs to the AccA family. As to quaternary structure, acetyl-CoA carboxylase is a heterohexamer composed of biotin carboxyl carrier protein (AccB), biotin carboxylase (AccC) and two subunits each of ACCase subunit alpha (AccA) and ACCase subunit beta (AccD).

Its subcellular location is the cytoplasm. The enzyme catalyses N(6)-carboxybiotinyl-L-lysyl-[protein] + acetyl-CoA = N(6)-biotinyl-L-lysyl-[protein] + malonyl-CoA. The protein operates within lipid metabolism; malonyl-CoA biosynthesis; malonyl-CoA from acetyl-CoA: step 1/1. Its function is as follows. Component of the acetyl coenzyme A carboxylase (ACC) complex. First, biotin carboxylase catalyzes the carboxylation of biotin on its carrier protein (BCCP) and then the CO(2) group is transferred by the carboxyltransferase to acetyl-CoA to form malonyl-CoA. In Geobacillus sp. (strain WCH70), this protein is Acetyl-coenzyme A carboxylase carboxyl transferase subunit alpha.